The chain runs to 445 residues: N-succinylarginine dihydrolase (445 aa).

Residues 19–28 (AGLSFGNVAS), asparagine 110, and 137–138 (HR) contribute to the substrate site. Glutamate 174 is an active-site residue. Arginine 214 contributes to the substrate binding site. Histidine 250 is an active-site residue. Residues aspartate 252 and asparagine 363 each contribute to the substrate site. The active-site Nucleophile is cysteine 369.

This sequence belongs to the succinylarginine dihydrolase family. As to quaternary structure, homodimer.

The enzyme catalyses N(2)-succinyl-L-arginine + 2 H2O + 2 H(+) = N(2)-succinyl-L-ornithine + 2 NH4(+) + CO2. It functions in the pathway amino-acid degradation; L-arginine degradation via AST pathway; L-glutamate and succinate from L-arginine: step 2/5. Functionally, catalyzes the hydrolysis of N(2)-succinylarginine into N(2)-succinylornithine, ammonia and CO(2). In Shewanella halifaxensis (strain HAW-EB4), this protein is N-succinylarginine dihydrolase.